A 101-amino-acid chain; its full sequence is Small ribosomal subunit protein uS14 (101 aa).

It belongs to the universal ribosomal protein uS14 family. As to quaternary structure, part of the 30S ribosomal subunit. Contacts proteins S3 and S10.

Binds 16S rRNA, required for the assembly of 30S particles and may also be responsible for determining the conformation of the 16S rRNA at the A site. The protein is Small ribosomal subunit protein uS14 of Blochmanniella floridana.